We begin with the raw amino-acid sequence, 972 residues long: Coatomer subunit beta (972 aa).

5 HEAT repeats span residues 79–113 (LLYF…DLQH), 133–170 (ELLE…VSEH), 317–354 (GCLE…SRNI), 397–434 (EIAA…LYPQ), and 481–518 (RQSI…QAGP). A disordered region spans residues 494–522 (LKNQRKSQDEDDEATEESATKQAGPVILP).

Oligomeric complex that consists of at least the alpha, beta, beta', gamma, delta, epsilon and zeta subunits.

The protein localises to the cytoplasm. Its subcellular location is the golgi apparatus membrane. The protein resides in the cytoplasmic vesicle. It is found in the COPI-coated vesicle membrane. Functionally, the coatomer is a cytosolic protein complex that binds to dilysine motifs and reversibly associates with Golgi non-clathrin-coated vesicles, which further mediate biosynthetic protein transport from the ER, via the Golgi up to the trans Golgi network. Coatomer complex is required for budding from Golgi membranes, and is essential for the retrograde Golgi-to-ER transport of dilysine-tagged proteins. In Candida glabrata (strain ATCC 2001 / BCRC 20586 / JCM 3761 / NBRC 0622 / NRRL Y-65 / CBS 138) (Yeast), this protein is Coatomer subunit beta.